Here is a 380-residue protein sequence, read N- to C-terminus: Cytochrome b (380 aa).

A run of 4 helical transmembrane segments spans residues 34–54 (FGSL…LLAA), 78–99 (WLIR…YLHI), 114–134 (WNTG…GYVL), and 179–199 (FFTL…IHLT). Positions 84 and 98 each coordinate heme b. Positions 183 and 197 each coordinate heme b. H202 contributes to the a ubiquinone binding site. A run of 4 helical transmembrane segments spans residues 227–247 (LKDT…ALFS), 289–309 (LGGV…PLLH), 321–341 (LFQL…WVGS), and 348–368 (FIII…ILFP).

It belongs to the cytochrome b family. In terms of assembly, the cytochrome bc1 complex contains 11 subunits: 3 respiratory subunits (MT-CYB, CYC1 and UQCRFS1), 2 core proteins (UQCRC1 and UQCRC2) and 6 low-molecular weight proteins (UQCRH/QCR6, UQCRB/QCR7, UQCRQ/QCR8, UQCR10/QCR9, UQCR11/QCR10 and a cleavage product of UQCRFS1). This cytochrome bc1 complex then forms a dimer. Requires heme b as cofactor.

It is found in the mitochondrion inner membrane. In terms of biological role, component of the ubiquinol-cytochrome c reductase complex (complex III or cytochrome b-c1 complex) that is part of the mitochondrial respiratory chain. The b-c1 complex mediates electron transfer from ubiquinol to cytochrome c. Contributes to the generation of a proton gradient across the mitochondrial membrane that is then used for ATP synthesis. This chain is Cytochrome b (MT-CYB), found in Grus nigricollis (Black-necked crane).